Consider the following 62-residue polypeptide: UPF0434 protein FTM_0733 (62 aa).

It belongs to the UPF0434 family.

The chain is UPF0434 protein FTM_0733 from Francisella tularensis subsp. mediasiatica (strain FSC147).